The following is a 715-amino-acid chain: Glycine--tRNA ligase beta subunit (715 aa).

It belongs to the class-II aminoacyl-tRNA synthetase family. In terms of assembly, tetramer of two alpha and two beta subunits.

It localises to the cytoplasm. The enzyme catalyses tRNA(Gly) + glycine + ATP = glycyl-tRNA(Gly) + AMP + diphosphate. This is Glycine--tRNA ligase beta subunit from Nitrosomonas eutropha (strain DSM 101675 / C91 / Nm57).